The chain runs to 159 residues: Large ribosomal subunit protein uL22 (159 aa).

This sequence belongs to the universal ribosomal protein uL22 family. Part of the 50S ribosomal subunit.

This protein binds specifically to 23S rRNA; its binding is stimulated by other ribosomal proteins, e.g. L4, L17, and L20. It is important during the early stages of 50S assembly. It makes multiple contacts with different domains of the 23S rRNA in the assembled 50S subunit and ribosome. In terms of biological role, the globular domain of the protein is located near the polypeptide exit tunnel on the outside of the subunit, while an extended beta-hairpin is found that lines the wall of the exit tunnel in the center of the 70S ribosome. This Thermotoga sp. (strain RQ2) protein is Large ribosomal subunit protein uL22.